The primary structure comprises 446 residues: MRTLNTSTMEGTGLVAERDFSFRILTACFLSLLILSTLLGNTLVCAAVIRFRHLRSKVTNFFVISLAVSDLLVAVLVMPWKAVAEIAGFWPFGSFCNIWVAFDIMCSTASILNLCVISVDRYWAISSPFRYERKMTPKAAFILISVAWTLSVLISFIPVQLSWHKAKPTGPSEGNATSLGKTINNCDSSLSRTYAISSSLISFYIPVAIMIVTYTRIYRIAQKQIRRISALERAAVHAKNCQTTTGNGNPMECSQPESSFKMSFKRETKVLKTLSVIMGVFVCCWLPFFILNCMVPFCGSGETKPFCIDSITFDVFVWFGWANSSLNPIIYAFNADFRKAFSTLLGCYRLCPTTNNAIETVSINNNGAVVFSSHHEPRGSISKDCNVVYLIPHAVGSSEGLKKEEAVGIAKPLEKLSPALSVILDYDTDVSLEKIQPITQNGQHPT.

Over 1–23 (MRTLNTSTMEGTGLVAERDFSFR) the chain is Extracellular. An N-linked (GlcNAc...) asparagine glycan is attached at asparagine 5. A helical membrane pass occupies residues 24–49 (ILTACFLSLLILSTLLGNTLVCAAVI). Residues 50–60 (RFRHLRSKVTN) lie on the Cytoplasmic side of the membrane. The helical transmembrane segment at 61–87 (FFVISLAVSDLLVAVLVMPWKAVAEIA) threads the bilayer. Over 88-96 (GFWPFGSFC) the chain is Extracellular. Residues cysteine 96 and cysteine 186 are joined by a disulfide bond. Residues 97–119 (NIWVAFDIMCSTASILNLCVISV) traverse the membrane as a helical segment. Topologically, residues 120 to 138 (DRYWAISSPFRYERKMTPK) are cytoplasmic. The chain crosses the membrane as a helical span at residues 139 to 163 (AAFILISVAWTLSVLISFIPVQLSW). At 164–192 (HKAKPTGPSEGNATSLGKTINNCDSSLSR) the chain is on the extracellular side. A glycan (N-linked (GlcNAc...) asparagine) is linked at asparagine 175. Residues 193-218 (TYAISSSLISFYIPVAIMIVTYTRIY) traverse the membrane as a helical segment. At 219 to 272 (RIAQKQIRRISALERAAVHAKNCQTTTGNGNPMECSQPESSFKMSFKRETKVLK) the chain is on the cytoplasmic side. A helical membrane pass occupies residues 273–299 (TLSVIMGVFVCCWLPFFILNCMVPFCG). The Extracellular segment spans residues 300 to 312 (SGETKPFCIDSIT). Residues 313 to 337 (FDVFVWFGWANSSLNPIIYAFNADF) traverse the membrane as a helical segment. Residues 338-446 (RKAFSTLLGC…PITQNGQHPT (109 aa)) lie on the Cytoplasmic side of the membrane. 2 S-palmitoyl cysteine lipidation sites follow: cysteine 347 and cysteine 351.

It belongs to the G-protein coupled receptor 1 family. As to quaternary structure, interacts with DNAJC14 via its C-terminus. Interacts with DRD2. Interacts with DORIP1.

It is found in the cell membrane. The protein localises to the endoplasmic reticulum membrane. Its subcellular location is the cell projection. The protein resides in the cilium membrane. It localises to the dendrite. It is found in the dendritic spine. In terms of biological role, dopamine receptor whose activity is mediated by G proteins which activate adenylyl cyclase. This Bos taurus (Bovine) protein is D(1A) dopamine receptor (DRD1).